We begin with the raw amino-acid sequence, 314 residues long: uncharacterized protein (314 aa).

The tract at residues 1–71 (MAGNSQRRGA…QRAGRKADET (71 aa)) is disordered. S-adenosyl-L-methionine is bound by residues G266, I286, and L295.

This sequence belongs to the class IV-like SAM-binding methyltransferase superfamily. RNA methyltransferase TrmH family.

This is an uncharacterized protein from Mycolicibacterium smegmatis (strain ATCC 700084 / mc(2)155) (Mycobacterium smegmatis).